Here is a 530-residue protein sequence, read N- to C-terminus: Chaperone Ric-8A (530 aa).

S435 carries the post-translational modification Phosphoserine. Phosphothreonine occurs at positions 440 and 442. Residues S501, S522, S523, and S527 each carry the phosphoserine modification.

The protein belongs to the synembryn family. In terms of assembly, interacts with GDP-bound G alpha proteins GNAI1, GNAO1 and GNAQ, and with GNA13 with lower affinity. Does not interact with G-alpha proteins when they are in complex with subunits beta and gamma. Interacts (via C-terminus) with RGS14; the interaction stimulates the dissociation of the complex between RGS14 and the active GTP-bound form of GNAI1. Interacts with NCS1; interaction is favored in the absence of Ca(2+) and myristoylation of NCS1 is not required. Phosphorylated at Ser-435 and Thr-440 by CK2, stabilizing its interface with G alpha proteins.

The protein resides in the cytoplasm. The protein localises to the cell cortex. Functionally, chaperone that specifically binds and folds nascent G alpha proteins prior to G protein heterotrimer formation, promoting their stability and activity: folds GNAI1, GNAO1, GNA13 and GNAQ. Does not fold G(s) G-alpha proteins GNAS nor GNAL. Also acts as a guanine nucleotide exchange factor (GEF) for G alpha proteins by stimulating exchange of bound GDP for free GTP. Involved in regulation of microtubule pulling forces during mitotic movement of chromosomes by stimulating G(i)-alpha protein (GNAI1), possibly leading to release G(i)-alpha-GTP and NuMA proteins from the NuMA-GPSM2-G(i)-alpha-GDP complex. Also acts as an activator for G(q)-alpha (GNAQ) protein by enhancing the G(q)-coupled receptor-mediated ERK activation. This is Chaperone Ric-8A (RIC8A) from Bos taurus (Bovine).